Reading from the N-terminus, the 58-residue chain is Alpha-conotoxin-like Pu1.6 (58 aa).

Residues 1 to 17 (MFTVFLLVVLVTTVVFS) form the signal peptide. The propeptide occupies 18 to 35 (TSDHRPASNHENRRASKR). 2 cysteine pairs are disulfide-bonded: Cys-44/Cys-50 and Cys-45/Cys-58. A lacks the Ser-Xaa-Pro motif that is crucial for potent interaction with nAChR region spans residues 46 to 48 (TNP).

This sequence belongs to the conotoxin A superfamily. In terms of tissue distribution, expressed by the venom duct.

The protein localises to the secreted. Its function is as follows. Alpha-conotoxins act on postsynaptic membranes, they bind to the nicotinic acetylcholine receptors (nAChR) and thus inhibit them. Has possibly a distinct nAChR binding mode from other alpha-conotoxins, due to a different three residue motif (lacks the Ser-Xaa-Pro motif). The polypeptide is Alpha-conotoxin-like Pu1.6 (Conus pulicarius (Flea-bitten cone)).